Reading from the N-terminus, the 441-residue chain is Capsid protein (441 aa).

Positions 26–63 are disordered; that stretch reads DSKKKQPIYQNSSESEESETENKNFIYDFSSEEDFEEP. The Nuclear localization signal signature appears at 77-79; the sequence is KRK. A CCHC-type zinc finger spans residues 381-398; it reads CQCWLCHEEGHYANECPK.

The protein belongs to the caulimoviridae capsid protein family. As to quaternary structure, interacts (via nuclear localization signal) with host importin alpha.

The protein localises to the virion. The protein resides in the host nucleus. Functionally, self assembles to form an icosahedral capsid, about 50 nm in diameter, nm, composed of 420 subunits of the viral capsid protein. The capsid encapsulates the genomic dsDNA. Following virus entry into host cell, provides nuclear import of the viral genome. Virus particles do not enter the nucleus, but dock at the nuclear membrane through the interaction with host importins. This is Capsid protein from Soybean chlorotic mottle virus.